The following is a 459-amino-acid chain: MHNIHRRNFLKAAGAATAGLVTANIALNAYASSVAPKPQAGKSVIGLIAPKMDVVRVGFIGVGERGFSHVEQFCHLEGVELKAICDTHQAVLDRAIDHIVKQNRPKPAVYTGNDLSYRDLLSRDDIDIVIISTPWEWHAPMAIETMESGKHTFVEVPMALTVEECWQVVDTAERTQKNCMMMENVNYGREELMVLNMVRQGVFGELLHGEAAYIHELRWQMKEIDHKTGSWRTYWHTKRNGNLYPTHGLGPVSQYMNINRGDRFDYLTSMSSPALGRALYAKREFPADHERNQLKYINGDINTSLIKTVKGRTIMVQHDTTTPRPYSRHNLIQGTNGVFAGFPNRIAVENGGFGQSYHEWDMDMQKWYDKYDHPLWQRIGKEAEINGGHGGMDFVMLWRMIYCLRNGEALDQDVYDGASWSVVNILSEHSLNDRSNSVTFPDFTRGAWQTAKPLGIVGA.

Residues 1–31 (MHNIHRRNFLKAAGAATAGLVTANIALNAYA) constitute a signal peptide (tat-type signal). Residues 64 to 65 (ER), aspartate 86, 135 to 138 (WEWH), 155 to 156 (EV), and asparagine 184 contribute to the NAD(+) site. Substrate is bound by residues tyrosine 213, arginine 232, 244–247 (YPTH), and tyrosine 326. Tyrosine 244 serves as a coordination point for NAD(+).

The protein belongs to the Gfo/Idh/MocA family. Glycosyl hydrolase 109 subfamily. It depends on NAD(+) as a cofactor. Predicted to be exported by the Tat system. The position of the signal peptide cleavage has not been experimentally proven.

Functionally, glycosidase. The chain is Glycosyl hydrolase family 109 protein from Shewanella baltica (strain OS195).